We begin with the raw amino-acid sequence, 379 residues long: Putative 8-amino-7-oxononanoate synthase (379 aa).

Position 18 (R18) interacts with substrate. 106 to 107 (GY) provides a ligand contact to pyridoxal 5'-phosphate. H130 contacts substrate. Residues S178, 204–207 (DEAH), and 235–238 (TFGK) each bind pyridoxal 5'-phosphate. K238 bears the N6-(pyridoxal phosphate)lysine mark. T351 lines the substrate pocket.

The protein belongs to the class-II pyridoxal-phosphate-dependent aminotransferase family. BioF subfamily. Homodimer. Pyridoxal 5'-phosphate is required as a cofactor.

It catalyses the reaction 6-carboxyhexanoyl-[ACP] + L-alanine + H(+) = (8S)-8-amino-7-oxononanoate + holo-[ACP] + CO2. Its pathway is cofactor biosynthesis; biotin biosynthesis. Catalyzes the decarboxylative condensation of pimeloyl-[acyl-carrier protein] and L-alanine to produce 8-amino-7-oxononanoate (AON), [acyl-carrier protein], and carbon dioxide. The protein is Putative 8-amino-7-oxononanoate synthase (bioF) of Haemophilus influenzae (strain 86-028NP).